The sequence spans 588 residues: Calcium/calmodulin-dependent protein kinase kinase 2 (588 aa).

Residues 1–11 (MSSCVSSQPTS) are compositionally biased toward polar residues. Disordered stretches follow at residues 1 to 34 (MSSCVSSQPTSDRVAPQDELGSGGGSREGQKPCE) and 64 to 147 (DLNL…PTVE). Position 2 is an N-acetylserine (serine 2). Phosphoserine occurs at positions 99, 114, 129, 133, and 137. The segment covering 101–116 (QEPSQGGPASSSNSLD) has biased composition (polar residues). Low complexity predominate over residues 124-139 (PSLSYSPASSPQSSPR). One can recognise a Protein kinase domain in the interval 165 to 446 (YTLKDEIGKG…VPEIKLHPWV (282 aa)). Residues 171 to 179 (IGKGSYGVV) and lysine 194 contribute to the ATP site. The segment at 204-226 (QAGFPRRPPPRGARPAPGGCIQP) is RP domain. The interval 205 to 225 (AGFPRRPPPRGARPAPGGCIQ) is disordered. The Proton acceptor role is filled by aspartate 312. The interval 472-477 (ENSVKH) is autoinhibitory domain. The calmodulin-binding stretch occupies residues 475–500 (VKHIPSLATVILVKTMIRKRSFGNPF). 4 positions are modified to phosphoserine: serine 495, serine 511, threonine 522, and serine 572. Positions 497-588 (GNPFEGSRRE…LQPEEVMEPE (92 aa)) are disordered. Residues 521 to 536 (PTREWEPLSEPKEARQ) are compositionally biased toward basic and acidic residues. Positions 570–580 (PGSPPRMPPLQ) are enriched in pro residues.

The protein belongs to the protein kinase superfamily. Ser/Thr protein kinase family. Interacts with calmodulin. In terms of processing, autophosphorylated and phosphorylated by PKA. Each isoform may show a different pattern of phosphorylation. Expressed in all tissues tested. A differential expression pattern compared to CAMKK1 is observed in the brain.

The protein resides in the nucleus. The protein localises to the cytoplasm. Its subcellular location is the cell projection. It is found in the neuron projection. It carries out the reaction L-seryl-[protein] + ATP = O-phospho-L-seryl-[protein] + ADP + H(+). The catalysed reaction is L-threonyl-[protein] + ATP = O-phospho-L-threonyl-[protein] + ADP + H(+). Activated by Ca(2+)/calmodulin. Binding of calmodulin may relieve intrasteric autoinhibition. Autophosphorylation does not alter activity or regulation by Ca(2+)/calmodulin. In part, activity is independent on Ca(2+)/calmodulin. Its function is as follows. Calcium/calmodulin-dependent protein kinase belonging to a proposed calcium-triggered signaling cascade involved in a number of cellular processes. Phosphorylates CAMK1, CAMK4 and CAMK1D. Efficiently phosphorylates 5'-AMP-activated protein kinase (AMPK) trimer, including that consisting of PRKAA1, PRKAB1 and PRKAG1. This phosphorylation is stimulated in response to Ca(2+) signals. May play a role in neurite growth. Isoform 2 may promote neurite elongation, while isoform 1 may promoter neurite branching. May be involved in hippocampal activation of CREB1. The sequence is that of Calcium/calmodulin-dependent protein kinase kinase 2 (Camkk2) from Mus musculus (Mouse).